We begin with the raw amino-acid sequence, 507 residues long: TOM1-like protein 2 (507 aa).

Residues 20–152 enclose the VHS domain; sequence ATDGSLQSED…ELKRRGIEFP (133 aa). Ser160 carries the post-translational modification Phosphoserine. Thr164 is subject to Phosphothreonine. The segment at 164-200 is disordered; that stretch reads TPQRSVPEMDPAATIPRSQTQPRTTAGTYSSPPPASY. In terms of domain architecture, GAT spans 219-307; sequence EQIARLRSEL…VFLRYERFER (89 aa). A Clathrin-binding motif is present at residues 329-334; the sequence is NLIDLG. The segment at 466–507 is disordered; the sequence is ERAKAAETVPDLPSPPTEAPAPASNTSTRKKPERSDDALFAL. Over residues 498–507 the composition is skewed to basic and acidic residues; it reads ERSDDALFAL.

This sequence belongs to the TOM1 family. In terms of assembly, interacts with clathrin, SRC and TOLLIP. Interacts with MYO6. Ubiquitously expressed. Splicing pattern displays tissue specific variation.

Acts as a MYO6/Myosin VI adapter protein that targets myosin VI to endocytic structures. May also play a role in recruiting clathrin to endosomes. May regulate growth factor-induced mitogenic signaling. The chain is TOM1-like protein 2 (Tom1l2) from Mus musculus (Mouse).